Reading from the N-terminus, the 90-residue chain is Probable Fe(2+)-trafficking protein (90 aa).

It belongs to the Fe(2+)-trafficking protein family.

Its function is as follows. Could be a mediator in iron transactions between iron acquisition and iron-requiring processes, such as synthesis and/or repair of Fe-S clusters in biosynthetic enzymes. The polypeptide is Probable Fe(2+)-trafficking protein (Vibrio parahaemolyticus serotype O3:K6 (strain RIMD 2210633)).